We begin with the raw amino-acid sequence, 273 residues long: Shikimate dehydrogenase (NADP(+)) (273 aa).

Residues 15–17 and T62 contribute to the shikimate site; that span reads SLS. Residue K66 is the Proton acceptor of the active site. E78 contacts NADP(+). N87 and D102 together coordinate shikimate. Residues 126 to 130, 150 to 155, and I217 each bind NADP(+); these read GAGGA and NRTIEK. Residue Y219 participates in shikimate binding. An NADP(+)-binding site is contributed by G240.

Belongs to the shikimate dehydrogenase family. As to quaternary structure, homodimer.

It catalyses the reaction shikimate + NADP(+) = 3-dehydroshikimate + NADPH + H(+). It functions in the pathway metabolic intermediate biosynthesis; chorismate biosynthesis; chorismate from D-erythrose 4-phosphate and phosphoenolpyruvate: step 4/7. Involved in the biosynthesis of the chorismate, which leads to the biosynthesis of aromatic amino acids. Catalyzes the reversible NADPH linked reduction of 3-dehydroshikimate (DHSA) to yield shikimate (SA). The chain is Shikimate dehydrogenase (NADP(+)) from Nitrosopumilus maritimus (strain SCM1).